The primary structure comprises 360 residues: Phenylalanine--tRNA ligase alpha subunit (360 aa).

Glutamate 260 is a binding site for Mg(2+).

Belongs to the class-II aminoacyl-tRNA synthetase family. Phe-tRNA synthetase alpha subunit type 1 subfamily. Tetramer of two alpha and two beta subunits. Requires Mg(2+) as cofactor.

The protein resides in the cytoplasm. The catalysed reaction is tRNA(Phe) + L-phenylalanine + ATP = L-phenylalanyl-tRNA(Phe) + AMP + diphosphate + H(+). The sequence is that of Phenylalanine--tRNA ligase alpha subunit from Afipia carboxidovorans (strain ATCC 49405 / DSM 1227 / KCTC 32145 / OM5) (Oligotropha carboxidovorans).